Reading from the N-terminus, the 173-residue chain is Large ribosomal subunit protein uL10 (173 aa).

It belongs to the universal ribosomal protein uL10 family. As to quaternary structure, part of the ribosomal stalk of the 50S ribosomal subunit. The N-terminus interacts with L11 and the large rRNA to form the base of the stalk. The C-terminus forms an elongated spine to which L12 dimers bind in a sequential fashion forming a multimeric L10(L12)X complex.

In terms of biological role, forms part of the ribosomal stalk, playing a central role in the interaction of the ribosome with GTP-bound translation factors. In Chlorobium phaeobacteroides (strain BS1), this protein is Large ribosomal subunit protein uL10.